Reading from the N-terminus, the 102-residue chain is MAPRRISVSETSRPVLPRHARLKFDETRQRWVILAPERVLAPDEIAVEILQLCDGARDVAAIIDALAVRYTADRAEIGRDVVAMLQDLADKGFLTEARETTP.

The protein belongs to the PqqD family. In terms of assembly, monomer. Interacts with PqqE.

Its pathway is cofactor biosynthesis; pyrroloquinoline quinone biosynthesis. In terms of biological role, functions as a PqqA binding protein and presents PqqA to PqqE, in the pyrroloquinoline quinone (PQQ) biosynthetic pathway. This is PqqA binding protein from Rhodopseudomonas palustris (strain TIE-1).